The primary structure comprises 194 residues: CASP-like protein 2C2 (194 aa).

The Cytoplasmic portion of the chain corresponds to 1-27 (MAAGQPRPPPPPSSVRTERVLRAACAA). The chain crosses the membrane as a helical span at residues 28-48 (MAAAGALLLGFSAETKTVIFV). At 49 to 58 (QKKAVPKDVQ) the chain is on the extracellular side. A helical membrane pass occupies residues 59–79 (ALWVLIVAAAAAAAYHAAQLA). Residues 80–113 (RCLCMDRLAGGGGGCRRLRRAVACATFLLDKGCA) lie on the Cytoplasmic side of the membrane. The chain crosses the membrane as a helical span at residues 114–134 (YMVLATTVAALQACFVGLLGV). The Extracellular portion of the chain corresponds to 135-152 (EALQWSKLCNIYTRFCEQ). Residues 153–173 (AAAGMVCSLVAAAGMAVLSAF) form a helical membrane-spanning segment. Over 174 to 194 (SARDLFRRRRPCSPCVQVQQV) the chain is Cytoplasmic.

It belongs to the Casparian strip membrane proteins (CASP) family. As to quaternary structure, homodimer and heterodimers.

The protein resides in the cell membrane. This Sorghum bicolor (Sorghum) protein is CASP-like protein 2C2.